Reading from the N-terminus, the 97-residue chain is Early nodulin-75 (97 aa).

The tract at residues 1 to 97 is disordered; it reads RPHVHPPPEH…PEYQPPHEKP (97 aa). Composition is skewed to pro residues over residues 9–22 and 31–43; these read EHQPPLEHPPPEYQ and VHPPPEYQPPYQK. Basic and acidic residues predominate over residues 76–97; sequence PPHEKPPHEHPPPEYQPPHEKP.

Belongs to the nodulin 75 family.

Its function is as follows. Involved in early stages of root nodule development. The sequence is that of Early nodulin-75 (ENOD2) from Medicago sativa (Alfalfa).